A 519-amino-acid chain; its full sequence is ATP synthase subunit alpha (519 aa).

175–182 (GDRQTGKT) lines the ATP pocket.

It belongs to the ATPase alpha/beta chains family. In terms of assembly, F-type ATPases have 2 components, CF(1) - the catalytic core - and CF(0) - the membrane proton channel. CF(1) has five subunits: alpha(3), beta(3), gamma(1), delta(1), epsilon(1). CF(0) has three main subunits: a(1), b(2) and c(9-12). The alpha and beta chains form an alternating ring which encloses part of the gamma chain. CF(1) is attached to CF(0) by a central stalk formed by the gamma and epsilon chains, while a peripheral stalk is formed by the delta and b chains.

It localises to the cell inner membrane. The enzyme catalyses ATP + H2O + 4 H(+)(in) = ADP + phosphate + 5 H(+)(out). In terms of biological role, produces ATP from ADP in the presence of a proton gradient across the membrane. The alpha chain is a regulatory subunit. The chain is ATP synthase subunit alpha from Acinetobacter baylyi (strain ATCC 33305 / BD413 / ADP1).